A 266-amino-acid chain; its full sequence is Undecaprenyl-diphosphatase (266 aa).

8 consecutive transmembrane segments (helical) span residues Met1–Ile21, Gln39–Phe59, Trp87–Ile107, Phe111–Ala131, Val144–Thr164, Ala183–Val203, Ala218–Leu238, and Met246–Leu266.

It belongs to the UppP family.

The protein localises to the cell inner membrane. The catalysed reaction is di-trans,octa-cis-undecaprenyl diphosphate + H2O = di-trans,octa-cis-undecaprenyl phosphate + phosphate + H(+). Functionally, catalyzes the dephosphorylation of undecaprenyl diphosphate (UPP). Confers resistance to bacitracin. This chain is Undecaprenyl-diphosphatase, found in Shewanella halifaxensis (strain HAW-EB4).